The primary structure comprises 1121 residues: Potassium channel subfamily U member 1 (1121 aa).

Residues 1 to 24 (MSQTLLDSLNQKELTETSCTIEIQ) are Extracellular-facing. The helical transmembrane segment at 25–45 (AAFILSSLATFFGGLIILFLF) threads the bilayer. The Cytoplasmic portion of the chain corresponds to 46-101 (RIALKSSRSWKYVKGPRGLLELFSSRRIEANPLRKLYFHGVFRQRIEMLLSAQTVV). Residues 102 to 122 (GQVLVILVFVLSIGSLVIYFI) traverse the membrane as a helical segment. At 123-137 (NSMDPVRRCSSYEDK) the chain is on the extracellular side. The helical transmembrane segment at 138 to 158 (IVHVDLSFNAFFSFYFGLRFW) threads the bilayer. Residues 159-165 (AAEDKIK) are Cytoplasmic-facing. A helical membrane pass occupies residues 166-186 (FWLEMNSIVDIFTIPPTFISY). Residues 187–188 (YL) are Extracellular-facing. The helical; Voltage-sensor transmembrane segment at 189–209 (KSNWLGLRFLRALRLLELPKI) threads the bilayer. Residues 210 to 226 (LQILQVIKTSNSVKLSK) are Cytoplasmic-facing. A helical membrane pass occupies residues 227–247 (LLSIVISTWFTAAGFLHLVEN). The Extracellular segment spans residues 248 to 259 (SGDPWLNGRNSQ). An intramembrane region (pore-forming) is located at residues 260-282 (TMSYFESIYLVTATMSTVGFGDV). The Selectivity for potassium signature appears at 276–279 (TVGF). The Extracellular portion of the chain corresponds to 283 to 290 (VAKTSLGR). A helical transmembrane segment spans residues 291–311 (IFIVFFTLGSLILFANYIPEM). Over 312-1121 (VELFSTRKKY…LDASDIVQEK (810 aa)) the chain is Cytoplasmic. RCK N-terminal domains follow at residues 331–473 (KKFI…DNIL) and 718–889 (QNHI…DGML). Disordered regions lie at residues 836–858 (SPTP…KERK) and 1052–1076 (DSSP…GSNF).

This sequence belongs to the potassium channel family. Calcium-activated (TC 1.A.1.3) subfamily. KCa5.1/KCNU1 sub-subfamily. As to quaternary structure, homotetramer; which constitutes the calcium-activated potassium channel. Interact with LRRC52; this interaction changes some channel gating properties, such as shifting gating to more negative potentials at a given pH. As to expression, testis-specific. Mainly expressed in spermatocytes. In terms of tissue distribution, expressed in testis, brain, eye and kidney.

The protein resides in the cell membrane. It localises to the cytoplasm. The enzyme catalyses K(+)(in) = K(+)(out). With respect to regulation, regulated by changes in cytosolic pH; activated by alkalization. In contrast to human KCNU1 is not activated by Ca(2+) or Mg(2+). The auxiliary subunit LRRC52 shifts the activation of KCNU1 to more negative potentials at a given pH. Functionally, testis-specific potassium channel activated by both intracellular pH and membrane voltage that mediates export of K(+). Represents the primary spermatozoan K(+) current. The channel underlies a pH-triggered membrane hyperpolarization during the process of sperm capacitation, as sperm encounter the alkaline environment near the ovum in the female reproductive tract, thereby playing an essential for male fertility. The chain is Potassium channel subfamily U member 1 (Kcnu1) from Mus musculus (Mouse).